We begin with the raw amino-acid sequence, 83 residues long: RNA-binding protein Hfq (83 aa).

The Sm domain occupies 10–70 (DTFLNQVRKE…ISTVMPLRPI (61 aa)).

Belongs to the Hfq family. Homohexamer.

RNA chaperone that binds small regulatory RNA (sRNAs) and mRNAs to facilitate mRNA translational regulation in response to envelope stress, environmental stress and changes in metabolite concentrations. Also binds with high specificity to tRNAs. The sequence is that of RNA-binding protein Hfq from Desulfitobacterium hafniense (strain Y51).